The primary structure comprises 356 residues: CLIP domain-containing serine protease C9 (356 aa).

A Clip domain is found at Ser-49–Cys-94. 4 disulfides stabilise this stretch: Cys-50–Cys-93, Cys-60–Cys-83, Cys-66–Cys-94, and Cys-139–Cys-155. The N-linked (GlcNAc...) asparagine glycan is linked to Asn-62. One can recognise a Peptidase S1 domain in the interval Ile-109–Ser-351. Active-site charge relay system residues include His-154 and Asp-194. A disulfide bridge links Cys-258 with Cys-284. A glycan (N-linked (GlcNAc...) asparagine) is linked at Asn-292. Cys-300 and Cys-328 are oxidised to a cystine. Ser-304 functions as the Charge relay system in the catalytic mechanism.

This sequence belongs to the peptidase S1 family. CLIP subfamily. In the active form, heterodimer of a p12 subunit and a p30 subunit; disulfide-linked. Post-translationally, secreted as a full-length protein. Following bacterium E.coli infection, proteolytically cleaved into two chains, p12 and p30, which remain covalently linked.

It localises to the secreted. Functionally, probable serine protease which plays an essential role in the innate immune response against bacteria and protozoa infection by activating the melanization cascade. In the susceptible strain G3, appears to be dispensable for ookinete elimination which occurs by lysis. The polypeptide is CLIP domain-containing serine protease C9 (Anopheles gambiae (African malaria mosquito)).